The chain runs to 197 residues: Thymidylate kinase (197 aa).

7 to 14 (GIDGSGKS) is an ATP binding site.

This sequence belongs to the thymidylate kinase family.

The enzyme catalyses dTMP + ATP = dTDP + ADP. In terms of biological role, phosphorylation of dTMP to form dTDP in both de novo and salvage pathways of dTTP synthesis. The chain is Thymidylate kinase from Thermotoga sp. (strain RQ2).